The primary structure comprises 205 residues: Molybdenum cofactor guanylyltransferase (205 aa).

Residues 14–16 (LAG), lysine 27, aspartate 77, and aspartate 107 each bind GTP. Residue aspartate 107 coordinates Mg(2+).

Belongs to the MobA family. In terms of assembly, monomer. It depends on Mg(2+) as a cofactor.

It localises to the cytoplasm. The enzyme catalyses Mo-molybdopterin + GTP + H(+) = Mo-molybdopterin guanine dinucleotide + diphosphate. Functionally, transfers a GMP moiety from GTP to Mo-molybdopterin (Mo-MPT) cofactor (Moco or molybdenum cofactor) to form Mo-molybdopterin guanine dinucleotide (Mo-MGD) cofactor. The chain is Molybdenum cofactor guanylyltransferase from Burkholderia cenocepacia (strain HI2424).